The following is a 105-amino-acid chain: MAIRYPMAVGLNKGYKVTKNVSKPRHCRRRGRLTKHTKFVRDMIREVCGFAPYERRAMELLKVSKDKRALKFIKKRVGTHIRAKRKREELSNVLAAMRKAAAKKD.

This sequence belongs to the eukaryotic ribosomal protein eL36 family. As to quaternary structure, component of the large ribosomal subunit.

Its subcellular location is the cytoplasm. The protein localises to the cytosol. Functionally, component of the large ribosomal subunit. The ribosome is a large ribonucleoprotein complex responsible for the synthesis of proteins in the cell. This Gallus gallus (Chicken) protein is Large ribosomal subunit protein eL36 (RPL36).